We begin with the raw amino-acid sequence, 233 residues long: Small ribosomal subunit protein uS3 (233 aa).

The 70-residue stretch at 39 to 108 folds into the KH type-2 domain; the sequence is IRTALFKLLK…KLIVNVRVIE (70 aa).

The protein belongs to the universal ribosomal protein uS3 family. Part of the 30S ribosomal subunit. Forms a tight complex with proteins S10 and S14.

In terms of biological role, binds the lower part of the 30S subunit head. Binds mRNA in the 70S ribosome, positioning it for translation. This Mycoplasma mycoides subsp. mycoides SC (strain CCUG 32753 / NCTC 10114 / PG1) protein is Small ribosomal subunit protein uS3.